The primary structure comprises 343 residues: Thymidine kinase (343 aa).

Glycine 27 to serine 34 serves as a coordination point for ATP. The active-site Proton acceptor is the glutamate 56. Substrate contacts are provided by tyrosine 74 and glutamine 98. ATP is bound at residue arginine 188. Arginine 194 contributes to the substrate binding site.

Belongs to the herpesviridae thymidine kinase family. In terms of assembly, homodimer.

The catalysed reaction is thymidine + ATP = dTMP + ADP + H(+). In terms of biological role, catalyzes the transfer of the gamma-phospho group of ATP to thymidine to generate dTMP in the salvage pathway of pyrimidine synthesis. The dTMP serves as a substrate for DNA polymerase during viral DNA replication. Allows the virus to be reactivated and to grow in non-proliferative cells lacking a high concentration of phosphorylated nucleic acid precursors. This is Thymidine kinase from Felidae (cat family).